The sequence spans 202 residues: Holliday junction branch migration complex subunit RuvA (202 aa).

A domain I region spans residues 1-63 (MIASLRGTVL…EDSMTLYGFT (63 aa)). Positions 64 to 142 (SQDDRDMFHV…AFAPAESADL (79 aa)) are domain II. Residues 143–148 (SSAAPA) are flexible linker. Positions 149–202 (AAGPVVEDVVEALIGLGFTDKMARPVVESVVAEQPDAATPVVLRAALSQLGAKK) are domain III.

Belongs to the RuvA family. Homotetramer. Forms an RuvA(8)-RuvB(12)-Holliday junction (HJ) complex. HJ DNA is sandwiched between 2 RuvA tetramers; dsDNA enters through RuvA and exits via RuvB. An RuvB hexamer assembles on each DNA strand where it exits the tetramer. Each RuvB hexamer is contacted by two RuvA subunits (via domain III) on 2 adjacent RuvB subunits; this complex drives branch migration. In the full resolvosome a probable DNA-RuvA(4)-RuvB(12)-RuvC(2) complex forms which resolves the HJ.

Its subcellular location is the cytoplasm. Its function is as follows. The RuvA-RuvB-RuvC complex processes Holliday junction (HJ) DNA during genetic recombination and DNA repair, while the RuvA-RuvB complex plays an important role in the rescue of blocked DNA replication forks via replication fork reversal (RFR). RuvA specifically binds to HJ cruciform DNA, conferring on it an open structure. The RuvB hexamer acts as an ATP-dependent pump, pulling dsDNA into and through the RuvAB complex. HJ branch migration allows RuvC to scan DNA until it finds its consensus sequence, where it cleaves and resolves the cruciform DNA. In Corynebacterium aurimucosum (strain ATCC 700975 / DSM 44827 / CIP 107346 / CN-1) (Corynebacterium nigricans), this protein is Holliday junction branch migration complex subunit RuvA.